Here is a 397-residue protein sequence, read N- to C-terminus: Nuclear RNA export factor 5 (397 aa).

The RRM domain occupies 13-92; that stretch reads WFKVTIPYGI…IFVSHFTAPY (80 aa). LRR repeat units follow at residues 160-185, 186-209, 210-237, and 238-265; these read ELLSLNLCNNKLYQLDGLSDITEKAP, KVKTLNLSKNKLESAWELGKVKGL, KLEELWLEGNPLCSTFSDQSAYVSAIRD, and CFPKLLRLDGRELSAPVIVDIDSSETMK. In terms of domain architecture, NTF2; truncated spans 280 to 367; sequence LVLQFLQQSN…ESQRWWCLLS (88 aa).

This sequence belongs to the NXF family. In terms of assembly, interacts with NXT1 and NXT2.

Its subcellular location is the cytoplasm. The protein resides in the nucleus. Could be involved in the export of mRNA from the nucleus to the cytoplasm. Could also have a role in polarized cytoplasmic transport and localization of mRNA in neurons. This is Nuclear RNA export factor 5 (NXF5) from Homo sapiens (Human).